We begin with the raw amino-acid sequence, 259 residues long: Acyl-[acyl-carrier-protein]--UDP-N-acetylglucosamine O-acyltransferase (259 aa).

This sequence belongs to the transferase hexapeptide repeat family. LpxA subfamily. In terms of assembly, homotrimer.

It localises to the cytoplasm. It catalyses the reaction a (3R)-hydroxyacyl-[ACP] + UDP-N-acetyl-alpha-D-glucosamine = a UDP-3-O-[(3R)-3-hydroxyacyl]-N-acetyl-alpha-D-glucosamine + holo-[ACP]. It functions in the pathway glycolipid biosynthesis; lipid IV(A) biosynthesis; lipid IV(A) from (3R)-3-hydroxytetradecanoyl-[acyl-carrier-protein] and UDP-N-acetyl-alpha-D-glucosamine: step 1/6. Functionally, involved in the biosynthesis of lipid A, a phosphorylated glycolipid that anchors the lipopolysaccharide to the outer membrane of the cell. This chain is Acyl-[acyl-carrier-protein]--UDP-N-acetylglucosamine O-acyltransferase, found in Psychrobacter cryohalolentis (strain ATCC BAA-1226 / DSM 17306 / VKM B-2378 / K5).